The chain runs to 377 residues: Nitric oxide reductase FlRd-NAD(+) reductase (377 aa).

It belongs to the FAD-dependent oxidoreductase family. FAD is required as a cofactor.

Its subcellular location is the cytoplasm. It carries out the reaction 2 reduced [nitric oxide reductase rubredoxin domain] + NAD(+) + H(+) = 2 oxidized [nitric oxide reductase rubredoxin domain] + NADH. The protein operates within nitrogen metabolism; nitric oxide reduction. Its function is as follows. One of at least two accessory proteins for anaerobic nitric oxide (NO) reductase. Reduces the rubredoxin moiety of NO reductase. This chain is Nitric oxide reductase FlRd-NAD(+) reductase (norW), found in Shigella boydii serotype 4 (strain Sb227).